Consider the following 310-residue polypeptide: Protein OS-9 homolog (310 aa).

Positions 1-40 (MFSSSMFPHLILPAIGSSKVRTMVLPFAFVGFFIFPICLA) are cleaved as a signal peptide. N-linked (GlcNAc...) asparagine glycans are attached at residues N60, N97, and N104. An MRH domain is found at 129–255 (NVFLIENRGY…TIHVPGLCSL (127 aa)). A mannooligosaccharide derivative contacts are provided by W139 and Q151. An N-linked (GlcNAc...) asparagine glycan is attached at N204. 2 disulfides stabilise this stretch: C208–C241 and C223–C253. A mannooligosaccharide derivative-binding residues include D209, R215, E237, and Y243. Basic and acidic residues-rich tracts occupy residues 282-292 (VDHKDSQHVVD) and 301-310 (EVKEVETQSS). Residues 282–310 (VDHKDSQHVVDEVAQTSPPEVKEVETQSS) form a disordered region.

It belongs to the OS-9 family. In terms of assembly, interacts with missfolded ER lumenal proteins.

The protein resides in the endoplasmic reticulum membrane. Lectin involved in the quality control of the secretory pathway. As a member of the endoplasmic reticulum-associated degradation lumenal (ERAD-L) surveillance system, targets misfolded endoplasmic reticulum lumenal glycoproteins for degradation. The chain is Protein OS-9 homolog (yos9) from Schizosaccharomyces pombe (strain 972 / ATCC 24843) (Fission yeast).